The sequence spans 206 residues: FMN-dependent NADH:quinone oxidoreductase (206 aa).

Residues serine 9, 15–17 (SVS), and 139–142 (SRGG) contribute to the FMN site.

Belongs to the azoreductase type 1 family. As to quaternary structure, homodimer. FMN serves as cofactor.

It catalyses the reaction 2 a quinone + NADH + H(+) = 2 a 1,4-benzosemiquinone + NAD(+). The catalysed reaction is N,N-dimethyl-1,4-phenylenediamine + anthranilate + 2 NAD(+) = 2-(4-dimethylaminophenyl)diazenylbenzoate + 2 NADH + 2 H(+). In terms of biological role, quinone reductase that provides resistance to thiol-specific stress caused by electrophilic quinones. Its function is as follows. Also exhibits azoreductase activity. Catalyzes the reductive cleavage of the azo bond in aromatic azo compounds to the corresponding amines. The protein is FMN-dependent NADH:quinone oxidoreductase of Cupriavidus necator (strain ATCC 17699 / DSM 428 / KCTC 22496 / NCIMB 10442 / H16 / Stanier 337) (Ralstonia eutropha).